Here is a 504-residue protein sequence, read N- to C-terminus: FAD-dependent monooxygenase nsrK (504 aa).

An FAD-binding site is contributed by Arg146. Arg227 is a catalytic residue. 2 residues coordinate FAD: Asp340 and Gly353.

The protein belongs to the paxM FAD-dependent monooxygenase family. Requires FAD as cofactor.

It participates in secondary metabolite biosynthesis. FAD-dependent monooxygenase; part of the gene cluster that mediates the biosynthesis of the tetrahydroxanthone dimer neosartorin, which exhibits antibacterial activity. The two different monomeric units appear to be synthesized by the same set of enzymes, among which the Baeyer-Villiger monooxygenase nsrF is the key enzyme for the divergence of the biosynthetic routes. The pathway begins with the synthesis of atrochrysone thioester by the polyketide synthase nsrB. The atrochrysone carboxyl ACP thioesterase nsrC then breaks the thioester bond and releases the atrochrysone carboxylic acid from AacuL. Atrochrysone carboxylic acid is decarboxylated by the decarboxylase nsrE, and oxidized by the anthrone oxygenase nsrD to yield emodin. Emodin is then reduced to emodin hydroquinone by the oxidoreductase nsrR. A-ring reduction by the short chain dehydrogenase nsrJ, dehydration by the scytalone dehydratase-like protein nsrI and probable spontaneous re-oxidation, results in overall deoxygenation to chrysophanol. The Baeyer-Villiger monooxygenase nsrF accepts chrysophanol as a substrate to insert one oxygen atom at two different positions to yield the precursors of both monomric units. NsrF is promiscuous/flexible in interacting with the 2 (non methylated and methylated) aromatic rings of chrysophanol, thus diverging the biosynthetic pathway at this point. After the hydrolysis of the lactones, methylesterification by the methyltransferase nsrG yields respectively moniliphenone and 2,2',6'-trihydroxy-4-methyl-6-methoxya-cyldiphenylmethanone. The next steps are the hydroxylation by the FAD-dependent monooxygenase nsrK, followed by isomerization by the monooxygenase nsrQ. The short chain dehydrogenase/reductase nsrO then catalyzes the C-5 ketoreduction to give the xanthone skeleton of blennolide C and 5-acetylblennolide A. The acetyltransferase nsrL has a strict substrate specificity and uses only blennolide A but not blennolide C to yield 5-acetylblennolide A as the single-acetylated product. In the final step of the biosynthesis, the heterodimerization of the 2 xanthones, blennolide C and 5-acetylblennolide A, is catalyzed by the cytochrome P450 monooxygenase nsrP. NsrP can utilize at least three different xanthones as its substrates to perform the dimerization reaction. The polypeptide is FAD-dependent monooxygenase nsrK (Aspergillus novofumigatus (strain IBT 16806)).